The following is a 73-amino-acid chain: DNA-binding protein S1FA3 (73 aa).

The short motif at 47-52 is the Nuclear localization signal element; it reads PPRKKK. Residues 47–63 show a composition bias toward basic residues; sequence PPRKKKPVSKKKMKKEK. The disordered stretch occupies residues 47 to 73; the sequence is PPRKKKPVSKKKMKKEKMKQGVQVPGE.

The protein belongs to the S1FA transcription factor family.

Its subcellular location is the nucleus. Its function is as follows. DNA-binding protein that specifically recognizes a negative element (S1F) within the RPS1 promoter. The protein is DNA-binding protein S1FA3 (S1FA3) of Arabidopsis thaliana (Mouse-ear cress).